A 212-amino-acid polypeptide reads, in one-letter code: Holliday junction branch migration complex subunit RuvA (212 aa).

Residues 1–66 (MISGLKGTLK…ERGQKLFGFL (66 aa)) form a domain I region. Residues 67-145 (TEQDKEFFKV…KLELFLSGTS (79 aa)) form a domain II region. The flexible linker stretch occupies residues 146–162 (KEPSISLSSFSETPEEA). Residues 163–212 (ALSRKREIAILGLVQLGFEEKTASKEVDKILKSSSPTDPGEIIREILKSL) form a domain III region.

It belongs to the RuvA family. Homotetramer. Forms an RuvA(8)-RuvB(12)-Holliday junction (HJ) complex. HJ DNA is sandwiched between 2 RuvA tetramers; dsDNA enters through RuvA and exits via RuvB. An RuvB hexamer assembles on each DNA strand where it exits the tetramer. Each RuvB hexamer is contacted by two RuvA subunits (via domain III) on 2 adjacent RuvB subunits; this complex drives branch migration. In the full resolvosome a probable DNA-RuvA(4)-RuvB(12)-RuvC(2) complex forms which resolves the HJ.

The protein resides in the cytoplasm. Its function is as follows. The RuvA-RuvB-RuvC complex processes Holliday junction (HJ) DNA during genetic recombination and DNA repair, while the RuvA-RuvB complex plays an important role in the rescue of blocked DNA replication forks via replication fork reversal (RFR). RuvA specifically binds to HJ cruciform DNA, conferring on it an open structure. The RuvB hexamer acts as an ATP-dependent pump, pulling dsDNA into and through the RuvAB complex. HJ branch migration allows RuvC to scan DNA until it finds its consensus sequence, where it cleaves and resolves the cruciform DNA. The polypeptide is Holliday junction branch migration complex subunit RuvA (Leptospira borgpetersenii serovar Hardjo-bovis (strain JB197)).